A 304-amino-acid chain; its full sequence is MSLFHLIAPSGYCIKQHAALRGIQRLTDAGHQVNNVEVIARRCERFAGTETERLEDLNSLARLTTPNTIVLAVRGGYGASRLLADIDWQALVARQQYDPLLICGHSDFTAIQCGLLAQGNVITFSGPMLVANFGADELNTFTEHHFWLALRNETFTIEWQGEGPTCRAEGTLWGGNLAMLISLIGTPWMPKIENGILVLEDINEHPFRVERMLLQLYHAGILPRQKAIILGSFSGSTPNDYDAGYNLESVYAFLRSRLSIPLITGLDFGHEQRTVTLPLGAHAILTNTREGTQLTISGHPVLKM.

Ser-106 acts as the Nucleophile in catalysis. Residues Glu-200 and His-270 each act as charge relay system in the active site.

The protein belongs to the peptidase S66 family.

It is found in the cytoplasm. The catalysed reaction is N-acetyl-D-glucosaminyl-N-acetylmuramoyl-L-alanyl-meso-2,6-diaminoheptanedioyl-D-alanine + H2O = N-acetyl-D-glucosaminyl-N-acetylmuramoyl-L-alanyl-meso-2,6-diaminoheptanedioate + D-alanine. Its pathway is cell wall biogenesis; peptidoglycan recycling. Functionally, releases the terminal D-alanine residue from the cytoplasmic tetrapeptide recycling product L-Ala-gamma-D-Glu-meso-Dap-D-Ala. Can also cleave D-Ala from murein derivatives containing the tetrapeptide, i.e. MurNAc-tetrapeptide, UDP-MurNAc-tetrapeptide, GlcNAc-MurNAc-tetrapeptide, and GlcNAc-anhMurNAc-tetrapeptide. Does not act on murein sacculi or cross-linked muropeptides. The tripeptides produced by the LcdA reaction can then be reused as peptidoglycan building blocks; LcdA is thereby involved in murein recycling. In Escherichia coli O157:H7, this protein is Murein tetrapeptide carboxypeptidase (ldcA).